Here is a 66-residue protein sequence, read N- to C-terminus: MKTLTFYTLLLCAALYSNFFDCKAVADAELPKLPDDKVLIRSRSNCPKGKVWNGFDCKSPFAFSKK.

A signal peptide spans 1 to 26; the sequence is MKTLTFYTLLLCAALYSNFFDCKAVA. A disulfide bridge connects residues C46 and C57.

The protein resides in the secreted. Functionally, possesses antifungal activity against phytopathogenic fungi such as P.oryzae, R.solani and B.cinerea but not against phytopathogenic bacteria. Shows weak activity against the insect pathogenic fungus B.bassiana and against S.aureus. Binds chitin. The protein is Scarabaecin of Oryctes rhinoceros (Coconut rhinoceros beetle).